A 336-amino-acid polypeptide reads, in one-letter code: Phosphoribosylformylglycinamidine cyclo-ligase (336 aa).

Belongs to the AIR synthase family.

It is found in the cytoplasm. It catalyses the reaction 2-formamido-N(1)-(5-O-phospho-beta-D-ribosyl)acetamidine + ATP = 5-amino-1-(5-phospho-beta-D-ribosyl)imidazole + ADP + phosphate + H(+). The protein operates within purine metabolism; IMP biosynthesis via de novo pathway; 5-amino-1-(5-phospho-D-ribosyl)imidazole from N(2)-formyl-N(1)-(5-phospho-D-ribosyl)glycinamide: step 2/2. This is Phosphoribosylformylglycinamidine cyclo-ligase from Thermoanaerobacter sp. (strain X514).